A 382-amino-acid chain; its full sequence is Ferredoxin--NADP reductase, root isozyme 2, chloroplastic (382 aa).

The N-terminal 64 residues, 1–64, are a transit peptide targeting the chloroplast; sequence MSHSAVSQAG…DGKRYPSTTI (64 aa). The FAD-binding FR-type domain maps to 97–225; it reads KESYTAKIVS…TGPSGKVMLL (129 aa). A disulfide bridge links Cys200 with Cys205. Residue Ser201 is modified to Phosphoserine. Thr233 is subject to Phosphothreonine. 235 to 253 contributes to the NADP(+) binding site; that stretch reads IMIATGTGVAPYRGYLRRM.

Belongs to the ferredoxin--NADP reductase type 1 family. It depends on FAD as a cofactor. Expressed in shoots and roots. More abundant in roots than RFNR1.

The protein localises to the plastid. Its subcellular location is the chloroplast. The enzyme catalyses 2 reduced [2Fe-2S]-[ferredoxin] + NADP(+) + H(+) = 2 oxidized [2Fe-2S]-[ferredoxin] + NADPH. Its function is as follows. Maintains the supply of reduced ferredoxin under non-photosynthetic conditions. The polypeptide is Ferredoxin--NADP reductase, root isozyme 2, chloroplastic (RFNR2) (Arabidopsis thaliana (Mouse-ear cress)).